Here is a 145-residue protein sequence, read N- to C-terminus: uncharacterized protein (145 aa).

The protein resides in the mitochondrion. This is an uncharacterized protein from Arabidopsis thaliana (Mouse-ear cress).